Consider the following 446-residue polypeptide: Packaging protein 1 (446 aa).

Positions 1 to 10 (METRGRRRAF) are enriched in basic residues. A disordered region spans residues 1-74 (METRGRRRAF…PSQPPQPRSL (74 aa)). 170 to 177 (GPTGCGKS) is a binding site for ATP. The tract at residues 439–446 (RAYRKRNK) is DNA-binding.

It belongs to the adenoviridae packaging protein 1 family. In terms of assembly, homodimer. Part of a genome packaging complex composed of packaging proteins 1, 2 and 3; this complex specifically binds to the packaging sequence on the left end of viral genomic DNA and performs packaging of the viral genome. Interacts with protein 33K.

The protein localises to the virion. It is found in the host nucleus. The protein resides in the host nucleoplasm. Its subcellular location is the host nucleolus. Component of the packaging machinery which encapsidates the viral DNA into preformed capsids and transcriptional activator of the viral major late promoter (MLP). Binds, along with packaging proteins 2 and 3, to the specific packaging sequence on the left end of viral genomic DNA and displays ATPase activity thereby providing the power stroke of the packaging machinery. The activity of packaging protein IVa2 is stimulated by protein 33K which acts as a terminase. May be the protein that pumps DNA into the capsid powered by ATP hydrolysis. Specifically binds to the 5'-CG-3' nucleotides of the repeats making up the packaging sequence. Component of the DEF-A and DEF-B transcription factors that bind downstream elements of the major late promoter (MLP), and stimulate transcription from the MLP after initiation of viral DNA replication. DEF-A is a heterodimer packaging proteins 1 and 2 and DEF-B is a homodimer of packaging protein 1. This chain is Packaging protein 1, found in Human adenovirus F serotype 40 (HAdV-40).